Here is a 238-residue protein sequence, read N- to C-terminus: Enolase-phosphatase E1 (238 aa).

Mg(2+) contacts are provided by Asp-14 and Glu-16. Residues 128–129 (SS) and Lys-165 contribute to the substrate site. Residue Asp-192 participates in Mg(2+) binding.

The protein belongs to the HAD-like hydrolase superfamily. MasA/MtnC family. In terms of assembly, monomer. The cofactor is Mg(2+).

It localises to the cytoplasm. Its subcellular location is the nucleus. It carries out the reaction 5-methylsulfanyl-2,3-dioxopentyl phosphate + H2O = 1,2-dihydroxy-5-(methylsulfanyl)pent-1-en-3-one + phosphate. Its pathway is amino-acid biosynthesis; L-methionine biosynthesis via salvage pathway; L-methionine from S-methyl-5-thio-alpha-D-ribose 1-phosphate: step 3/6. It functions in the pathway amino-acid biosynthesis; L-methionine biosynthesis via salvage pathway; L-methionine from S-methyl-5-thio-alpha-D-ribose 1-phosphate: step 4/6. In terms of biological role, bifunctional enzyme that catalyzes the enolization of 2,3-diketo-5-methylthiopentyl-1-phosphate (DK-MTP-1-P) into the intermediate 2-hydroxy-3-keto-5-methylthiopentenyl-1-phosphate (HK-MTPenyl-1-P), which is then dephosphorylated to form the acireductone 1,2-dihydroxy-3-keto-5-methylthiopentene (DHK-MTPene). This is Enolase-phosphatase E1 from Fusarium vanettenii (strain ATCC MYA-4622 / CBS 123669 / FGSC 9596 / NRRL 45880 / 77-13-4) (Fusarium solani subsp. pisi).